The sequence spans 402 residues: Glutamate N-acetyltransferase (402 aa).

Thr-146, Lys-172, Thr-185, Glu-267, Asn-397, and Thr-402 together coordinate substrate. Thr-185 serves as the catalytic Nucleophile.

This sequence belongs to the ArgJ family. As to quaternary structure, heterotetramer of two alpha and two beta chains.

The protein resides in the cytoplasm. The enzyme catalyses N(2)-acetyl-L-ornithine + L-glutamate = N-acetyl-L-glutamate + L-ornithine. The protein operates within amino-acid biosynthesis; L-arginine biosynthesis; L-ornithine and N-acetyl-L-glutamate from L-glutamate and N(2)-acetyl-L-ornithine (cyclic): step 1/1. With respect to regulation, competitively inhibited by L-ornithine. Catalyzes the transfer of the acetyl group from N(2)-acetylornithine to glutamate, forming N-acetylglutamate and L-ornithine. The chain is Glutamate N-acetyltransferase from Methanocaldococcus jannaschii (strain ATCC 43067 / DSM 2661 / JAL-1 / JCM 10045 / NBRC 100440) (Methanococcus jannaschii).